Here is a 326-residue protein sequence, read N- to C-terminus: Tetraacyldisaccharide 4'-kinase (326 aa).

53–60 (SVGGNGKT) provides a ligand contact to ATP.

This sequence belongs to the LpxK family.

It carries out the reaction a lipid A disaccharide + ATP = a lipid IVA + ADP + H(+). The protein operates within glycolipid biosynthesis; lipid IV(A) biosynthesis; lipid IV(A) from (3R)-3-hydroxytetradecanoyl-[acyl-carrier-protein] and UDP-N-acetyl-alpha-D-glucosamine: step 6/6. Its function is as follows. Transfers the gamma-phosphate of ATP to the 4'-position of a tetraacyldisaccharide 1-phosphate intermediate (termed DS-1-P) to form tetraacyldisaccharide 1,4'-bis-phosphate (lipid IVA). This chain is Tetraacyldisaccharide 4'-kinase, found in Actinobacillus pleuropneumoniae serotype 7 (strain AP76).